We begin with the raw amino-acid sequence, 657 residues long: Probable potassium transport system protein Kup (657 aa).

12 helical membrane passes run 14-34 (IGGL…SPLY), 47-67 (ADIV…QTTI), 96-116 (IQWL…DGII), 140-160 (TIVY…QFGT), 166-186 (FFAP…FIQI), 201-221 (AYHL…VFLC), 242-262 (ISWI…AAYL), 283-303 (LIMP…AAVI), 340-360 (LYIP…VLHF), 371-391 (GLAI…YLIM), 396-416 (LYFM…FLIA), and 425-445 (GYVT…WYLA).

Belongs to the HAK/KUP transporter (TC 2.A.72) family.

The protein resides in the cell inner membrane. The enzyme catalyses K(+)(in) + H(+)(in) = K(+)(out) + H(+)(out). Functionally, transport of potassium into the cell. Likely operates as a K(+):H(+) symporter. The protein is Probable potassium transport system protein Kup of Flavobacterium johnsoniae (strain ATCC 17061 / DSM 2064 / JCM 8514 / BCRC 14874 / CCUG 350202 / NBRC 14942 / NCIMB 11054 / UW101) (Cytophaga johnsonae).